A 60-amino-acid chain; its full sequence is Ixodegrin-like peptide (60 aa).

The N-terminal stretch at 1–21 is a signal peptide; the sequence is MNAAFIAALLILGALTLDAMA. Positions 49 to 51 match the Cell attachment site motif; the sequence is RGD.

The protein belongs to the ixodegrin family. Post-translationally, contains 3 disulfide bonds. As to expression, expressed in salivary glands.

It is found in the secreted. Its function is as follows. Tick salivary platelet aggregation inhibitor that plays an important part in the anti-hemostatic strategy of ticks. Inhibits platelet aggregation induced by ADP, thrombin and thromboxane A2 (TXA2). Blocks platelet adhesion to soluble collagen (most probably through the binding to alpha-2/beta-1 integrin (ITGA2/ITGB1)) and binds to purified glycoprotein IIb/IIIa (ITGA2B/ITGB3) in a dose-dependent manner. In vivo, reduces thrombus weight effectively in a rat arteriovenous shunt model and inhibits thrombosis in a carrageenan-induced mouse tail thrombosis model. This is Ixodegrin-like peptide from Ixodes scapularis (Black-legged tick).